A 193-amino-acid polypeptide reads, in one-letter code: Der GTPase-activating protein YihI (193 aa).

Residues 1–12 (MSAKQPNRKPTG) show a composition bias toward basic residues. Disordered stretches follow at residues 1 to 91 (MSAK…KLVM) and 143 to 193 (IIDN…PKKK). Residues 13–26 (KRKESDASALDGRE) are compositionally biased toward basic and acidic residues. Residues 27–36 (RKRAAKRKGL) are compositionally biased toward basic residues. Polar residues predominate over residues 40 to 54 (SRQQAEQSSKNNNGK). A compositionally biased stretch (acidic residues) spans 145 to 160 (DNDDDEEDDGSFDDAS). The span at 184–193 (PEPKPEPKKK) shows a compositional bias: basic and acidic residues.

The protein belongs to the YihI family. As to quaternary structure, interacts with Der.

Functionally, a GTPase-activating protein (GAP) that modifies Der/EngA GTPase function. May play a role in ribosome biogenesis. In Aeromonas salmonicida (strain A449), this protein is Der GTPase-activating protein YihI.